Here is a 109-residue protein sequence, read N- to C-terminus: Spermidine export protein MdtI (109 aa).

4 helical membrane-spanning segments follow: residues 6-26 (WWHA…NILL), 36-56 (WMGI…AQAV), 63-83 (IAYA…GWIM), and 88-108 (LNYK…MIKM).

Belongs to the drug/metabolite transporter (DMT) superfamily. Small multidrug resistance (SMR) (TC 2.A.7.1) family. MdtI subfamily. As to quaternary structure, forms a complex with MdtJ.

The protein localises to the cell inner membrane. Its function is as follows. Catalyzes the excretion of spermidine. This Photorhabdus laumondii subsp. laumondii (strain DSM 15139 / CIP 105565 / TT01) (Photorhabdus luminescens subsp. laumondii) protein is Spermidine export protein MdtI.